Reading from the N-terminus, the 232-residue chain is Probable fimbrial chaperone LpfB (232 aa).

Positions 1-24 are cleaved as a signal peptide; it reads MDRMMKSKFVALALSLFLSQSVLA.

This sequence belongs to the periplasmic pilus chaperone family.

It is found in the periplasm. In terms of biological role, part of the lpfABCC'DE fimbrial operon. LP fimbriae may participate in the interaction with eukaryotic cells by assisting in microcolony formation. This is Probable fimbrial chaperone LpfB (lpfB) from Escherichia coli O157:H7.